A 344-amino-acid chain; its full sequence is Adenosine kinase (344 aa).

D298 is a catalytic residue.

Belongs to the carbohydrate kinase PfkB family. Requires Mg(2+) as cofactor.

The enzyme catalyses adenosine + ATP = AMP + ADP + H(+). It participates in purine metabolism; AMP biosynthesis via salvage pathway; AMP from adenosine: step 1/1. The polypeptide is Adenosine kinase (ADK) (Schizophyllum commune (Split gill fungus)).